The primary structure comprises 424 residues: Serine--tRNA ligase (424 aa).

233-235 (TAE) contributes to the L-serine binding site. 264–266 (RRE) contributes to the ATP binding site. L-serine is bound at residue Glu287. 351–354 (EISS) serves as a coordination point for ATP. Position 387 (Ser387) interacts with L-serine.

The protein belongs to the class-II aminoacyl-tRNA synthetase family. Type-1 seryl-tRNA synthetase subfamily. Homodimer. The tRNA molecule binds across the dimer.

It localises to the cytoplasm. It carries out the reaction tRNA(Ser) + L-serine + ATP = L-seryl-tRNA(Ser) + AMP + diphosphate + H(+). It catalyses the reaction tRNA(Sec) + L-serine + ATP = L-seryl-tRNA(Sec) + AMP + diphosphate + H(+). Its pathway is aminoacyl-tRNA biosynthesis; selenocysteinyl-tRNA(Sec) biosynthesis; L-seryl-tRNA(Sec) from L-serine and tRNA(Sec): step 1/1. In terms of biological role, catalyzes the attachment of serine to tRNA(Ser). Is also able to aminoacylate tRNA(Sec) with serine, to form the misacylated tRNA L-seryl-tRNA(Sec), which will be further converted into selenocysteinyl-tRNA(Sec). This Acaryochloris marina (strain MBIC 11017) protein is Serine--tRNA ligase.